A 361-amino-acid polypeptide reads, in one-letter code: Chorismate synthase (361 aa).

NADP(+) contacts are provided by arginine 48 and arginine 54. Residues 125 to 127, 238 to 239, glycine 278, 293 to 297, and arginine 319 contribute to the FMN site; these read RSS, NA, and KPTSS.

This sequence belongs to the chorismate synthase family. In terms of assembly, homotetramer. The cofactor is FMNH2.

The enzyme catalyses 5-O-(1-carboxyvinyl)-3-phosphoshikimate = chorismate + phosphate. The protein operates within metabolic intermediate biosynthesis; chorismate biosynthesis; chorismate from D-erythrose 4-phosphate and phosphoenolpyruvate: step 7/7. Catalyzes the anti-1,4-elimination of the C-3 phosphate and the C-6 proR hydrogen from 5-enolpyruvylshikimate-3-phosphate (EPSP) to yield chorismate, which is the branch point compound that serves as the starting substrate for the three terminal pathways of aromatic amino acid biosynthesis. This reaction introduces a second double bond into the aromatic ring system. This chain is Chorismate synthase, found in Salmonella typhi.